Consider the following 376-residue polypeptide: Chaperone protein DnaJ (376 aa).

Residues 5–70 (DYYEVLGVAK…QKRAAYDQYG (66 aa)) enclose the J domain. Residues 136 to 214 (GYDTQIRVPS…CHGSGKVKET (79 aa)) form a CR-type zinc finger. Cys-149, Cys-152, Cys-166, Cys-169, Cys-188, Cys-191, Cys-202, and Cys-205 together coordinate Zn(2+). CXXCXGXG motif repeat units lie at residues 149-156 (CGICHGSG), 166-173 (CPTCHGQG), 188-195 (CPKCHGTG), and 202-209 (CVHCHGSG).

It belongs to the DnaJ family. Homodimer. Requires Zn(2+) as cofactor.

The protein localises to the cytoplasm. Functionally, participates actively in the response to hyperosmotic and heat shock by preventing the aggregation of stress-denatured proteins and by disaggregating proteins, also in an autonomous, DnaK-independent fashion. Unfolded proteins bind initially to DnaJ; upon interaction with the DnaJ-bound protein, DnaK hydrolyzes its bound ATP, resulting in the formation of a stable complex. GrpE releases ADP from DnaK; ATP binding to DnaK triggers the release of the substrate protein, thus completing the reaction cycle. Several rounds of ATP-dependent interactions between DnaJ, DnaK and GrpE are required for fully efficient folding. Also involved, together with DnaK and GrpE, in the DNA replication of plasmids through activation of initiation proteins. The sequence is that of Chaperone protein DnaJ from Burkholderia thailandensis (strain ATCC 700388 / DSM 13276 / CCUG 48851 / CIP 106301 / E264).